Reading from the N-terminus, the 57-residue chain is MFRYTRFEKARIIGARALQIAMGAPVLIDVPEGITPLQAALLEFEKGVIPITVIRPS.

The protein belongs to the archaeal Rpo6/eukaryotic RPB6 RNA polymerase subunit family. In terms of assembly, part of the RNA polymerase complex.

The protein resides in the cytoplasm. It is found in the chromosome. It catalyses the reaction RNA(n) + a ribonucleoside 5'-triphosphate = RNA(n+1) + diphosphate. Functionally, DNA-dependent RNA polymerase (RNAP) catalyzes the transcription of DNA into RNA using the four ribonucleoside triphosphates as substrates. The polypeptide is DNA-directed RNA polymerase subunit Rpo6 (Thermococcus kodakarensis (strain ATCC BAA-918 / JCM 12380 / KOD1) (Pyrococcus kodakaraensis (strain KOD1))).